The chain runs to 326 residues: Glyceraldehyde-3-phosphate dehydrogenase, cytosolic (326 aa).

Residues 2–3 (RI), Asp-24, and Arg-71 each bind NAD(+). D-glyceraldehyde 3-phosphate-binding positions include 142 to 144 (SCT), Thr-173, 202 to 203 (TG), and Arg-225. Cys-143 acts as the Nucleophile in catalysis. Asn-307 serves as a coordination point for NAD(+).

This sequence belongs to the glyceraldehyde-3-phosphate dehydrogenase family.

The protein localises to the cytoplasm. It carries out the reaction D-glyceraldehyde 3-phosphate + phosphate + NAD(+) = (2R)-3-phospho-glyceroyl phosphate + NADH + H(+). It participates in carbohydrate degradation; glycolysis; pyruvate from D-glyceraldehyde 3-phosphate: step 1/5. Key enzyme in glycolysis that catalyzes the first step of the pathway by converting D-glyceraldehyde 3-phosphate (G3P) into 3-phospho-D-glyceroyl phosphate. Essential for the maintenance of cellular ATP levels and carbohydrate metabolism. The protein is Glyceraldehyde-3-phosphate dehydrogenase, cytosolic (GAPC) of Nicotiana tabacum (Common tobacco).